The following is a 356-amino-acid chain: Protein MGF 360-10L (356 aa).

Residues 57–89 form an ANK repeat; it reads DLNTALMLATKENNYQLIKMFTDWGADINYGLI. The N-linked (GlcNAc...) asparagine; by host glycan is linked to N172. The chain crosses the membrane as a helical span at residues 249–271; it reads NFLTIYYCFILGANINLAMIASI. 2 N-linked (GlcNAc...) asparagine; by host glycosylation sites follow: N352 and N353.

It belongs to the asfivirus MGF 360 family.

The protein resides in the host membrane. Plays a role in virus cell tropism, and may be required for efficient virus replication in macrophages. This African swine fever virus (isolate Tick/South Africa/Pretoriuskop Pr4/1996) (ASFV) protein is Protein MGF 360-10L.